The chain runs to 153 residues: 6,7-dimethyl-8-ribityllumazine synthase (153 aa).

5-amino-6-(D-ribitylamino)uracil-binding positions include phenylalanine 21, 55-57 (AFE), and 79-81 (TVI). 84 to 85 (AT) is a (2S)-2-hydroxy-3-oxobutyl phosphate binding site. Catalysis depends on histidine 87, which acts as the Proton donor. Phenylalanine 112 serves as a coordination point for 5-amino-6-(D-ribitylamino)uracil. Residue arginine 126 coordinates (2S)-2-hydroxy-3-oxobutyl phosphate.

It belongs to the DMRL synthase family. As to quaternary structure, forms an icosahedral capsid composed of 60 subunits, arranged as a dodecamer of pentamers.

It carries out the reaction (2S)-2-hydroxy-3-oxobutyl phosphate + 5-amino-6-(D-ribitylamino)uracil = 6,7-dimethyl-8-(1-D-ribityl)lumazine + phosphate + 2 H2O + H(+). It participates in cofactor biosynthesis; riboflavin biosynthesis; riboflavin from 2-hydroxy-3-oxobutyl phosphate and 5-amino-6-(D-ribitylamino)uracil: step 1/2. Its function is as follows. Catalyzes the formation of 6,7-dimethyl-8-ribityllumazine by condensation of 5-amino-6-(D-ribitylamino)uracil with 3,4-dihydroxy-2-butanone 4-phosphate. This is the penultimate step in the biosynthesis of riboflavin. This is 6,7-dimethyl-8-ribityllumazine synthase from Bacillus cereus (strain ATCC 10987 / NRS 248).